A 257-amino-acid polypeptide reads, in one-letter code: MKSATSAQRPYQEVGAMIRDLIIKTPYNPGERLPPEREIAEMLDVTRTVVREALIMLEIKGLVEVRRGAGIYVLDNSGSQNTDSPDANVCNDAGPFELLQARQLLESNIAEFAALQATREDIVKMRQALQLEERELASSAPGSSESGDMQFHLAIAEATHNSMLVELFRQSWQWRENNPMWIQLHSHLDDSLYRKEWLGDHKQILAALIKKDARAAKLAMWQHLENVKQRLLEFSNVDDIYFDGYLFDSWPLDKVDA.

The region spanning 8-76 (QRPYQEVGAM…RGAGIYVLDN (69 aa)) is the HTH gntR-type domain. Residues 36–55 (EREIAEMLDVTRTVVREALI) constitute a DNA-binding region (H-T-H motif).

Repressor for the uxuRBA operon. This Escherichia coli (strain K12) protein is Uxu operon transcriptional regulator (uxuR).